Consider the following 359-residue polypeptide: MAEHGAHFTAASVADDQPSIFEVVAQDSLMTAVRPALQHVVKVLAESNPTHYGFLWRWFDEIFTLLDLLLQQHYLSRTSASFSENFYGLKRIVMGDTHKSQRLASAGLPKQQLWKSIMFLVLLPYLKVKLEKLVSSLREEDEYSIHPPSSRWKRFYRAFLAAYPFVNMAWEGWFLVQQLRYILGKAQHHSPLLRLAGVQLGRLTVQDIQALEHKPAKASMMQQPARSVSEKINSALKKAVGGVALSLSTGLSVGVFFLQFLDWWYSSENQETIKSLTALPTPPPPVHLDYNSDSPLLPKMKTVCPLCRKTRVNDTVLATSGYVFCYRCVFHYVRSHQACPITGYPTEVQHLIKLYSPEN.

At 1–19 the chain is on the peroxisomal matrix side; sequence MAEHGAHFTAASVADDQPS. A helical transmembrane segment spans residues 20–47; that stretch reads IFEVVAQDSLMTAVRPALQHVVKVLAES. The Cytoplasmic portion of the chain corresponds to 48–51; it reads NPTH. The helical transmembrane segment at 52 to 76 threads the bilayer; it reads YGFLWRWFDEIFTLLDLLLQQHYLS. Topologically, residues 77–109 are peroxisomal matrix; that stretch reads RTSASFSENFYGLKRIVMGDTHKSQRLASAGLP. Residues 110-139 traverse the membrane as a helical segment; that stretch reads KQQLWKSIMFLVLLPYLKVKLEKLVSSLRE. Over 140–144 the chain is Cytoplasmic; sequence EDEYS. A helical transmembrane segment spans residues 145–183; the sequence is IHPPSSRWKRFYRAFLAAYPFVNMAWEGWFLVQQLRYIL. Residues 184–249 are Peroxisomal matrix-facing; sequence GKAQHHSPLL…VGGVALSLST (66 aa). A helical transmembrane segment spans residues 250–277; it reads GLSVGVFFLQFLDWWYSSENQETIKSLT. Residues 278 to 359 are Cytoplasmic-facing; it reads ALPTPPPPVH…HLIKLYSPEN (82 aa). Positions 304, 307, 325, and 328 each coordinate Zn(2+). The segment at 304 to 343 adopts an RING-type; degenerate zinc-finger fold; sequence CPLCRKTRVNDTVLATSGYVFCYRCVFHYVRSHQACPITG.

This sequence belongs to the pex2/pex10/pex12 family. Component of the PEX2-PEX10-PEX12 retrotranslocation channel, composed of PEX2, PEX10 and PEX12. Interacts with PEX19 via its cytoplasmic domain.

It localises to the peroxisome membrane. Its pathway is protein modification; protein ubiquitination. Its function is as follows. Component of a retrotranslocation channel required for peroxisome organization by mediating export of the PEX5 receptor from peroxisomes to the cytosol, thereby promoting PEX5 recycling. The retrotranslocation channel is composed of PEX2, PEX10 and PEX12; each subunit contributing transmembrane segments that coassemble into an open channel that specifically allows the passage of PEX5 through the peroxisomal membrane. PEX12 also regulates PEX5 recycling by activating the E3 ubiquitin-protein ligase activity of PEX10. When PEX5 recycling is compromised, PEX12 stimulates PEX10-mediated polyubiquitination of PEX5, leading to its subsequent degradation. This is Peroxisome assembly protein 12 from Homo sapiens (Human).